The following is a 215-amino-acid chain: Glycerol-3-phosphate acyltransferase (215 aa).

Transmembrane regions (helical) follow at residues 14-34, 63-83, 92-112, 128-148, and 154-174; these read SSSA…AVVV, TAAA…LWLA, WGAY…PLFL, MAIE…VAVF, and LAAL…SGAA.

The protein belongs to the PlsY family. As to quaternary structure, probably interacts with PlsX.

Its subcellular location is the cell inner membrane. It catalyses the reaction an acyl phosphate + sn-glycerol 3-phosphate = a 1-acyl-sn-glycero-3-phosphate + phosphate. The protein operates within lipid metabolism; phospholipid metabolism. Its function is as follows. Catalyzes the transfer of an acyl group from acyl-phosphate (acyl-PO(4)) to glycerol-3-phosphate (G3P) to form lysophosphatidic acid (LPA). This enzyme utilizes acyl-phosphate as fatty acyl donor, but not acyl-CoA or acyl-ACP. This Bordetella bronchiseptica (strain ATCC BAA-588 / NCTC 13252 / RB50) (Alcaligenes bronchisepticus) protein is Glycerol-3-phosphate acyltransferase.